The primary structure comprises 410 residues: Translation initiation factor 2 subunit gamma (410 aa).

The tr-type G domain occupies 6-203; that stretch reads QSEINIGMVG…AIEDLMPTPE (198 aa). The segment at 15-22 is G1; that stretch reads GHVDHGKT. Residues aspartate 18, threonine 22, glycine 43, and serine 45 each coordinate Mg(2+). 18–23 provides a ligand contact to GTP; sequence DHGKTS. Positions 43-47 are G2; the sequence is GISIR. Zn(2+) is bound by residues cysteine 58, cysteine 61, cysteine 73, and cysteine 76. Residues 90–93 form a G3 region; that stretch reads DAPG. Residues 146–149 and 181–183 each bind GTP; these read NKID and SAH. The interval 146 to 149 is G4; it reads NKID. Residues 181-183 form a G5 region; the sequence is SAH.

It belongs to the TRAFAC class translation factor GTPase superfamily. Classic translation factor GTPase family. EIF2G subfamily. In terms of assembly, heterotrimer composed of an alpha, a beta and a gamma chain. Mg(2+) serves as cofactor.

It catalyses the reaction GTP + H2O = GDP + phosphate + H(+). Functionally, eIF-2 functions in the early steps of protein synthesis by forming a ternary complex with GTP and initiator tRNA. The protein is Translation initiation factor 2 subunit gamma of Methanococcus aeolicus (strain ATCC BAA-1280 / DSM 17508 / OCM 812 / Nankai-3).